The primary structure comprises 490 residues: Histone-lysine N-methyltransferase Smyd1 (490 aa).

Residues 7–253 (ENVEVFTSEG…EGEELTVSYI (247 aa)) enclose the SET domain. 17–19 (KGR) serves as a coordination point for S-adenosyl-L-methionine. Zn(2+) is bound by residues cysteine 52, cysteine 55, cysteine 65, cysteine 68, cysteine 74, cysteine 78, histidine 86, and cysteine 90. The MYND-type zinc-finger motif lies at 52-90 (CHTCFKRQEKLHRCGQCKFAHYCDRTCQKDAWLNHKNEC). Residues histidine 135 and 205–206 (NH) each bind S-adenosyl-L-methionine. Residue cysteine 208 coordinates Zn(2+). Position 270–272 (270–272 (YYF)) interacts with S-adenosyl-L-methionine. Residues cysteine 274, cysteine 276, and cysteine 279 each contribute to the Zn(2+) site.

This sequence belongs to the class V-like SAM-binding methyltransferase superfamily. As to quaternary structure, interacts with HDAC1, HDAC2 and HDAC3. Interacts (via MYND-type zinc finger) with NACA isoform skNAC. In terms of tissue distribution, expressed in cardiac and skeletal muscle, lymphocytes and thymus.

It is found in the cytoplasm. Its subcellular location is the nucleus. The enzyme catalyses L-lysyl(4)-[histone H3] + 3 S-adenosyl-L-methionine = N(6),N(6),N(6)-trimethyl-L-lysyl(4)-[histone H3] + 3 S-adenosyl-L-homocysteine + 3 H(+). Methylates histone H3 at 'Lys-4' (H3K4me). Acts as a transcriptional repressor. Essential for cardiomyocyte differentiation and cardiac morphogenesis. This chain is Histone-lysine N-methyltransferase Smyd1 (Smyd1), found in Mus musculus (Mouse).